The chain runs to 133 residues: Large-conductance mechanosensitive channel (133 aa).

A run of 2 helical transmembrane segments spans residues 10–30 (FAMRGNVVDMAVGVIIGGAFG) and 76–96 (GAFIQTVFDFVIIAFAIFLMI).

This sequence belongs to the MscL family. Homopentamer.

Its subcellular location is the cell inner membrane. In terms of biological role, channel that opens in response to stretch forces in the membrane lipid bilayer. May participate in the regulation of osmotic pressure changes within the cell. The protein is Large-conductance mechanosensitive channel of Pasteurella multocida (strain Pm70).